The primary structure comprises 448 residues: Bud neck protein 5 (448 aa).

Disordered regions lie at residues 63–103 (SGND…DPSQ), 171–211 (DDEW…TLGG), and 242–352 (GDNE…SSPI). Serine 70 and serine 179 each carry phosphoserine. A compositionally biased stretch (acidic residues) spans 171–180 (DDEWEDEKSD). The segment covering 181-191 (VEEGRVDKGTE) has biased composition (basic and acidic residues). Serine 194 is subject to Phosphoserine. A compositionally biased stretch (basic and acidic residues) spans 245-262 (EYNHESSRLADQTPHDDN). The residue at position 257 (threonine 257) is a Phosphothreonine. The segment covering 264 to 281 (ENCPNRSGGSTPLDSQTK) has biased composition (polar residues). Serine 270 and serine 273 each carry phosphoserine. A Phosphothreonine modification is found at threonine 274. Over residues 325–343 (SVSSNSNSRNGSRKSSLNK) the composition is skewed to low complexity. 2 positions are modified to phosphoserine: serine 332 and serine 340. Position 344 is a phosphotyrosine (tyrosine 344). A phosphoserine mark is found at serine 346 and serine 350.

Component of the GIN4 complex composed of at least BNI5, CDC3, CDC10, CDC11, CDC12, GIN4, NAP1 and SHS1. Interacts directly with CDC11, CDC12 and SHS1.

The protein localises to the cytoplasm. The protein resides in the bud neck. Required for normal septin function and cytokinesis. Its recruitment to the bud neck by CDCd11 and SHS1 ensures efficient localization at the bud neck of MYO1, the type II myosin of the actomyosin contractile ring. In Saccharomyces cerevisiae (strain ATCC 204508 / S288c) (Baker's yeast), this protein is Bud neck protein 5.